The following is a 98-amino-acid chain: MKLMVLVFTIGLTLLLGVQAMPANRLSCYRKILKDHNCHNLPEGVADLTQIDVNVQDHFWDGKGCEMICYCNFSELLCCPKDVFFGPKISFVIPCNNQ.

Residues 1 to 20 form the signal peptide; it reads MKLMVLVFTIGLTLLLGVQA. A glycan (N-linked (GlcNAc...) asparagine) is linked at Asn-72.

The protein belongs to the SCRG1 family. As to expression, expressed abundantly in the central nervous system of adult, but not at all in fetal brain. High levels of SCRG1 transcripts are also observed in testis and aorta.

Its subcellular location is the secreted. The polypeptide is Scrapie-responsive protein 1 (SCRG1) (Homo sapiens (Human)).